A 332-amino-acid chain; its full sequence is 3-ketodihydrosphingosine reductase (332 aa).

The signal sequence occupies residues 1 to 25 (MLLLAAASLVAFVLLLYMVSPLISP). Over 26–269 (KPLALPGAHV…QGNFNSSIGS (244 aa)) the chain is Cytoplasmic. NADPH is bound by residues Gly39, Ser41, Ser42, Gly43, Arg64, Lys68, and Asp93. A GXSXG motif is present at residues 39–43 (GGSSG). Residue Ser172 is the Proton donor of the active site. Residue Tyr186 is the Proton acceptor of the active site. NADP(+)-binding residues include Tyr186 and Lys190. The active-site Lowers pKa of active site Tyr is Lys190. The chain crosses the membrane as a helical span at residues 270 to 290 (DGYMLSSLTCGMAPVTSIMEG). Residues 291–292 (LQ) lie on the Lumenal side of the membrane. The chain crosses the membrane as a helical span at residues 293 to 313 (QVVTMGLFRTIALFYLGSFDS). At 314 to 331 (IVRRCMMQKAKLETVDKT) the chain is on the cytoplasmic side.

Belongs to the short-chain dehydrogenases/reductases (SDR) family.

It localises to the endoplasmic reticulum membrane. The enzyme catalyses sphinganine + NADP(+) = 3-oxosphinganine + NADPH + H(+). Its pathway is lipid metabolism; sphingolipid metabolism. In terms of biological role, catalyzes the reduction of 3'-oxosphinganine (3-ketodihydrosphingosine/KDS) to sphinganine (dihydrosphingosine/DHS), the second step of de novo sphingolipid biosynthesis. In Bos taurus (Bovine), this protein is 3-ketodihydrosphingosine reductase (KDSR).